Here is a 492-residue protein sequence, read N- to C-terminus: Trichothecene C-15 hydroxylase (492 aa).

A helical membrane pass occupies residues 6–26 (LWPLLALSGGTGLAYLVVVVV). Residues 88-106 (AMKDVRGHRKSGEPEHGKD) show a composition bias toward basic and acidic residues. A disordered region spans residues 88 to 116 (AMKDVRGHRKSGEPEHGKDPISVQSNGDN). 3 N-linked (GlcNAc...) asparagine glycosylation sites follow: Asn-124, Asn-198, and Asn-290. Cys-438 is a heme binding site.

Belongs to the cytochrome P450 family. Requires heme as cofactor.

It localises to the membrane. It functions in the pathway sesquiterpene biosynthesis; trichothecene biosynthesis. Functionally, trichothecene C-15 hydroxylase; part of the core gene cluster that mediates the biosynthesis of trichothecenes, a very large family of chemically related bicyclic sesquiterpene compounds acting as mycotoxins, including T2-toxin. The biosynthesis of trichothecenes begins with the cyclization of farnesyl diphosphate to trichodiene and is catalyzed by the trichodiene synthase TRI5. Trichodiene undergoes a series of oxygenations catalyzed by the cytochrome P450 monooxygenase TRI4. TRI4 controls the addition of four oxygens at C-2, C-3, C-11, and the C-12, C-13-epoxide to form the intermediate isotrichotriol. Isotrichotriol then undergoes a non-enzymatic isomerization and cyclization to form isotrichodermol. During this process, the oxygen at the C-2 position becomes the pyran ring oxygen and the hydroxyl group at C-11 is lost. More complex type A trichothecenes are built by modifying isotrichodermol through a series of paired hydroxylation and acetylation or acylation steps. Isotrichodermol is converted to isotrichodermin by the acetyltransferase TRI101. TRI101 encodes a C-3 transacetylase that acts as a self-protection or resistance factor during biosynthesis and that the presence of a free C-3 hydroxyl group is a key component of Fusarium trichothecene phytotoxicity. A second hydroxyl group is added to C-15 by the trichothecene C-15 hydroxylase TRI11, producing 15-decalonectrin, which is then acetylated by TRI3, producing calonectrin. A third hydroxyl group is added at C-4 by the cytochrome P450 monooxygenase TRI13, converting calonectrin to 3,15-diacetoxyspirpenol, which is subsequently acetylated by the acetyltransferase TRI7. A fourth hydroxyl group is added to C-8 by the cytochrome P450 monooxygenase TRI1, followed by the addition of an isovaleryl moiety by TRI16. Finally, the acetyl group is removed from the C-3 position by the trichothecene C-3 esterase TRI8 to produce T-2 toxin. This is Trichothecene C-15 hydroxylase from Fusarium sporotrichioides.